The chain runs to 256 residues: Type III pantothenate kinase (256 aa).

6-13 (DIGNTHTV) contacts ATP. Residues tyrosine 100 and 107 to 110 (GADR) contribute to the substrate site. The active-site Proton acceptor is aspartate 109. Aspartate 129 serves as a coordination point for K(+). Threonine 132 serves as a coordination point for ATP. Residue threonine 184 participates in substrate binding.

The protein belongs to the type III pantothenate kinase family. As to quaternary structure, homodimer. The cofactor is NH4(+). It depends on K(+) as a cofactor.

Its subcellular location is the cytoplasm. It catalyses the reaction (R)-pantothenate + ATP = (R)-4'-phosphopantothenate + ADP + H(+). The protein operates within cofactor biosynthesis; coenzyme A biosynthesis; CoA from (R)-pantothenate: step 1/5. In terms of biological role, catalyzes the phosphorylation of pantothenate (Pan), the first step in CoA biosynthesis. The sequence is that of Type III pantothenate kinase from Acidothermus cellulolyticus (strain ATCC 43068 / DSM 8971 / 11B).